Consider the following 99-residue polypeptide: NADH-quinone oxidoreductase subunit K (99 aa).

3 helical membrane-spanning segments follow: residues 3 to 23 (PDNY…GVLL), 28 to 48 (IVVF…FVAF), and 59 to 79 (VVAF…LAII).

Belongs to the complex I subunit 4L family. In terms of assembly, NDH-1 is composed of 14 different subunits. Subunits NuoA, H, J, K, L, M, N constitute the membrane sector of the complex.

The protein resides in the cell membrane. It catalyses the reaction a quinone + NADH + 5 H(+)(in) = a quinol + NAD(+) + 4 H(+)(out). NDH-1 shuttles electrons from NADH, via FMN and iron-sulfur (Fe-S) centers, to quinones in the respiratory chain. The immediate electron acceptor for the enzyme in this species is believed to be a menaquinone. Couples the redox reaction to proton translocation (for every two electrons transferred, four hydrogen ions are translocated across the cytoplasmic membrane), and thus conserves the redox energy in a proton gradient. This Mycobacterium sp. (strain JLS) protein is NADH-quinone oxidoreductase subunit K.